Consider the following 365-residue polypeptide: Caffeic acid 3-O-methyltransferase (365 aa).

Residue 130 to 136 (MNQDKVL) coordinates substrate. Positions 162–180 (AFDYHGTDPRFNKVFNKGM) are substrate binding. Gly-208, Asp-231, Asp-251, Met-252, and Lys-265 together coordinate S-adenosyl-L-methionine. His-269 (proton acceptor) is an active-site residue.

It belongs to the class I-like SAM-binding methyltransferase superfamily. Cation-independent O-methyltransferase family. COMT subfamily. Homodimer.

It carries out the reaction (E)-caffeate + S-adenosyl-L-methionine = (E)-ferulate + S-adenosyl-L-homocysteine + H(+). The protein operates within aromatic compound metabolism; phenylpropanoid biosynthesis. Functionally, catalyzes the conversion of caffeic acid to ferulic acid and of 5-hydroxyferulic acid to sinapic acid. The resulting products may subsequently be converted to the corresponding alcohols that are incorporated into lignins. This chain is Caffeic acid 3-O-methyltransferase (COMT1), found in Rosa chinensis (China rose).